We begin with the raw amino-acid sequence, 1466 residues long: Collagen alpha-1(III) chain (1466 aa).

Residues 1–23 form the signal peptide; the sequence is MMSFVQKGSWLLLALLHPTIILA. Positions 24-153 are cleaved as a propeptide — N-terminal propeptide; it reads QQEAVEGGCS…CPTGPQNYSP (130 aa). Positions 30–89 constitute a VWFC domain; that stretch reads GGCSHLGQSYADRDVWKPEPCQICVCDSGSVLCDDIICDDQELDCPNPEIPFGECCAVCP. Residues 95–1194 are disordered; that stretch reads PTRPPNGQGP…GPPGPPGAPG (1100 aa). Residues 99–108 show a composition bias toward low complexity; it reads PNGQGPQGPK. A compositionally biased stretch (polar residues) spans 146–155; sequence TGPQNYSPQY. The segment at 149–167 is nonhelical region (N-terminal); that stretch reads QNYSPQYDSYDVKSGVAVG. A triple-helical region region spans residues 168-1196; it reads GLAGYPGPAG…PGPPGAPGPC (1029 aa). 17 positions are modified to 4-hydroxyproline: P173, P179, P182, P185, P191, P194, P197, P203, P206, P215, P218, P236, P239, P245, P248, P257, and P260. A compositionally biased stretch (pro residues) spans 175-185; it reads PAGPPGPPGPP. Residues 187–199 show a composition bias toward low complexity; sequence TSGHPGSPGSPGY. The span at 229 to 241 shows a compositional bias: basic and acidic residues; that stretch reads KDGESGRPGRPGE. Residues 251–260 show a composition bias toward low complexity; that stretch reads KGPAGIPGFP. At K263 the chain carries 5-hydroxylysine; alternate. A glycan (O-linked (Gal...) hydroxylysine; alternate) is linked at K263. Over residues 266–277 the composition is skewed to basic and acidic residues; sequence RGFDGRNGEKGE. P281 is subject to 4-hydroxyproline. K284 is subject to 5-hydroxylysine. 4-hydroxyproline is present on residues P290, P296, P305, P311, P314, P332, P335, P338, P344, P347, P359, P365, P371, P383, P386, P392, P404, P407, P416, P425, P434, P443, P455, P458, P470, P473, P479, P488, P500, P512, P524, P530, P533, P539, P542, P545, P551, P554, P563, P566, P575, P581, P590, P599, P602, P608, P620, P635, P644, P650, P656, P659, P661, P668, P671, P680, P686, P692, P701, P703, P713, P716, P722, P728, P737, P746, P749, P755, P770, P776, P785, P788, P797, P806, P812, P815, P821, P830, P839, P845, and P854. A compositionally biased stretch (low complexity) spans 311–322; the sequence is PGLPGAAGARGN. The segment covering 355-380 has biased composition (low complexity); sequence PAGSPGSNGAPGQRGEPGPQGHAGAQ. A compositionally biased stretch (gly residues) spans 390-399; it reads GSPGGKGEMG. Residues 404 to 425 are compositionally biased toward low complexity; the sequence is PGAPGLMGARGPPGPAGANGAP. Residues 426–435 are compositionally biased toward gly residues; that stretch reads GLRGGAGEPG. The span at 478–523 shows a compositional bias: low complexity; that stretch reads LPGAAGERGAPGFRGPAGPNGIPGEKGPAGERGAPGPAGPRGAAGE. Residues 528–549 show a composition bias toward gly residues; the sequence is GVPGGPGMRGMPGSPGGPGSDG. Residues 642-651 are compositionally biased toward gly residues; that stretch reads GLPGTGGPPG. Residues 669–678 are compositionally biased toward gly residues; the sequence is GAPGGKGDAG. The span at 679-692 shows a compositional bias: low complexity; the sequence is APGERGPPGLAGAP. Positions 693-711 are enriched in gly residues; the sequence is GLRGGAGPPGPEGGKGAAG. Positions 729-738 are enriched in gly residues; the sequence is GERGGLGSPG. Low complexity predominate over residues 787 to 796; sequence LPGIAGPRGS. Basic and acidic residues predominate over residues 823-835; the sequence is GKGERGAPGEKGE. Over residues 836–850 the composition is skewed to gly residues; it reads GGPPGVAGPPGGSGP. The residue at position 860 (K860) is a 5-hydroxylysine. Residues 864 to 873 show a composition bias toward gly residues; the sequence is GSPGGPGAAG. P866, P869, P875, P881, P884, P890, P892, P899, P905, P914, P917, P929, P935, P941, and P944 each carry 4-hydroxyproline. Positions 890–907 are enriched in pro residues; that stretch reads PGPPGPSGSPGKDGPPGP. Residues 908-917 are compositionally biased toward low complexity; it reads AGNTGAPGSP. The span at 946 to 961 shows a compositional bias: low complexity; that stretch reads PLGIAGITGARGLAGP. 4-hydroxyproline occurs at positions 962, 965, and 971. K977 carries the 5-hydroxylysine modification. 4-hydroxyproline is present on residues P983, P995, P1001, P1010, P1016, P1022, P1028, P1040, P1043, P1046, P1049, P1052, P1076, and P1085. Pro residues predominate over residues 1046–1055; the sequence is PGHPGPPGPV. Residues 1067-1085 show a composition bias toward low complexity; the sequence is SGPAGPAGAPGPAGSRGAP. Residue K1106 is modified to 5-hydroxylysine. 4-hydroxyproline occurs at positions 1112, 1115, 1118, 1121, 1133, 1148, 1157, 1163, 1178, 1181, 1184, 1187, 1190, and 1193. A compositionally biased stretch (low complexity) spans 1123–1133; sequence PAGQQGAIGSP. A compositionally biased stretch (pro residues) spans 1181-1193; that stretch reads PGQPGPPGPPGAP. Residues 1197–1205 are nonhelical region (C-terminal); the sequence is CGGVGAAAI. The propeptide at 1222–1466 is C-terminal propeptide; that stretch reads DEPMDFKINT…GVDVGPVCFL (245 aa). A Fibrillar collagen NC1 domain is found at 1232-1466; that stretch reads DEIMTSLKSV…GVDVGPVCFL (235 aa). Intrachain disulfides connect C1262–C1294, C1302–C1464, and C1372–C1417. Ca(2+)-binding residues include D1280, N1282, Q1283, C1285, and D1288.

The protein belongs to the fibrillar collagen family. In terms of assembly, trimers of identical alpha 1(III) chains. The chains are linked to each other by interchain disulfide bonds. Trimers are also cross-linked via hydroxylysines. Interacts with ADGRG1. Proline residues at the third position of the tripeptide repeating unit (G-X-Y) are hydroxylated in some or all of the chains. Post-translationally, O-linked glycan consists of a Glc-Gal disaccharide bound to the oxygen atom of a post-translationally added hydroxyl group.

It is found in the secreted. It localises to the extracellular space. The protein resides in the extracellular matrix. Functionally, collagen type III occurs in most soft connective tissues along with type I collagen. Involved in regulation of cortical development. Is the major ligand of ADGRG1 in the developing brain and binding to ADGRG1 inhibits neuronal migration and activates the RhoA pathway by coupling ADGRG1 to GNA13 and possibly GNA12. The protein is Collagen alpha-1(III) chain (COL3A1) of Homo sapiens (Human).